The sequence spans 545 residues: MSAKDVRFSGDARDRMLRGVDILANAVKVTLGPKGRNVVIEKSFGAPRITKDGVTVAKEIELDDRFENMGAQMVREVASKTNDTAGDGTTTATVLAQAIVREGAKAVAAGMNPMDLKRGIDIAAAAVVKDIGKRAKPVASSAEVAQVGTISSNGDTAIGKMIAQAMQKVGNEGVITVEENKSLETDVDIVEGMRFDRGYLSPYFVTNAEKMTAELDGAYILLHEKKLSGLQAILPLLEAVVKSGKPLLIVAEDIEGEALATLVVNRLRGGLKVAAVKAPGFGDRRKAMLEDIAILTGGQLISDDLGIKLENVTVDMLGRAKKVVIDKENTTIVNGAGKKKDIEARVGQIKAQIEETTSDYDREKLQERLAKLAGGVAVIRVGGATEIEVKEKKDRVEDALNATRAAVQEGIVPGGGTALLRAKKAVGRIANDNPDVQAGINIVLKALEAPIRQIAENAGVEGSIVVGKVLENKTETFGFDAQKEEYVDMVAKGIIDPAKVVRTALQDAASVAGLLVTTEAMVAELPKEEPAPAMPGGGGMGGMGF.

Residues Thr30–Pro33, Lys51, Asp87–Thr91, Gly415, and Asp496 contribute to the ATP site.

The protein belongs to the chaperonin (HSP60) family. Forms a cylinder of 14 subunits composed of two heptameric rings stacked back-to-back. Interacts with the co-chaperonin GroES.

The protein localises to the cytoplasm. It catalyses the reaction ATP + H2O + a folded polypeptide = ADP + phosphate + an unfolded polypeptide.. In terms of biological role, together with its co-chaperonin GroES, plays an essential role in assisting protein folding. The GroEL-GroES system forms a nano-cage that allows encapsulation of the non-native substrate proteins and provides a physical environment optimized to promote and accelerate protein folding. The chain is Chaperonin GroEL 3 from Nitrobacter hamburgensis (strain DSM 10229 / NCIMB 13809 / X14).